The primary structure comprises 80 residues: Putative membrane protein insertion efficiency factor (80 aa).

The interval 61-80 (KTGKDPVPDHFSLKRNQEGE) is disordered. Over residues 62 to 80 (TGKDPVPDHFSLKRNQEGE) the composition is skewed to basic and acidic residues.

Belongs to the UPF0161 family.

It is found in the cell membrane. In terms of biological role, could be involved in insertion of integral membrane proteins into the membrane. This chain is Putative membrane protein insertion efficiency factor, found in Streptococcus pneumoniae serotype 2 (strain D39 / NCTC 7466).